Here is a 132-residue protein sequence, read N- to C-terminus: ATP synthase epsilon chain (132 aa).

It belongs to the ATPase epsilon chain family. F-type ATPases have 2 components, CF(1) - the catalytic core - and CF(0) - the membrane proton channel. CF(1) has five subunits: alpha(3), beta(3), gamma(1), delta(1), epsilon(1). CF(0) has three main subunits: a, b and c.

Its subcellular location is the cell inner membrane. In terms of biological role, produces ATP from ADP in the presence of a proton gradient across the membrane. This is ATP synthase epsilon chain from Parvibaculum lavamentivorans (strain DS-1 / DSM 13023 / NCIMB 13966).